A 226-amino-acid polypeptide reads, in one-letter code: 7-cyano-7-deazaguanine synthase (226 aa).

7-17 (LSGGMDSLVTT) is an ATP binding site. Zn(2+)-binding residues include cysteine 187, cysteine 195, cysteine 198, and cysteine 201.

This sequence belongs to the QueC family. It depends on Zn(2+) as a cofactor.

The catalysed reaction is 7-carboxy-7-deazaguanine + NH4(+) + ATP = 7-cyano-7-deazaguanine + ADP + phosphate + H2O + H(+). It participates in purine metabolism; 7-cyano-7-deazaguanine biosynthesis. Functionally, catalyzes the ATP-dependent conversion of 7-carboxy-7-deazaguanine (CDG) to 7-cyano-7-deazaguanine (preQ(0)). The protein is 7-cyano-7-deazaguanine synthase of Chloroherpeton thalassium (strain ATCC 35110 / GB-78).